The sequence spans 62 residues: Photosystem II reaction center protein Z (62 aa).

2 consecutive transmembrane segments (helical) span residues 8–28 (VLTA…VAYA) and 41–61 (YVGS…NFLV).

The protein belongs to the PsbZ family. PSII is composed of 1 copy each of membrane proteins PsbA, PsbB, PsbC, PsbD, PsbE, PsbF, PsbH, PsbI, PsbJ, PsbK, PsbL, PsbM, PsbT, PsbX, PsbY, PsbZ, Psb30/Ycf12, peripheral proteins PsbO, CyanoQ (PsbQ), PsbU, PsbV and a large number of cofactors. It forms dimeric complexes.

The protein resides in the cellular thylakoid membrane. In terms of biological role, may control the interaction of photosystem II (PSII) cores with the light-harvesting antenna, regulates electron flow through the 2 photosystem reaction centers. PSII is a light-driven water plastoquinone oxidoreductase, using light energy to abstract electrons from H(2)O, generating a proton gradient subsequently used for ATP formation. In Crocosphaera subtropica (strain ATCC 51142 / BH68) (Cyanothece sp. (strain ATCC 51142)), this protein is Photosystem II reaction center protein Z.